Reading from the N-terminus, the 123-residue chain is MPKRKAAAPNRAFKVADQIQRDLTELIARELKDPRVGMVTIQAVEVTPDYAHAKIYFSMLTGDVTETTEALNQAAGFLRNGLFKRLHIHTVPTLHFLFDRTTERAADMNALIAQAVASRSKDD.

Belongs to the RbfA family. Monomer. Binds 30S ribosomal subunits, but not 50S ribosomal subunits or 70S ribosomes.

It localises to the cytoplasm. Functionally, one of several proteins that assist in the late maturation steps of the functional core of the 30S ribosomal subunit. Associates with free 30S ribosomal subunits (but not with 30S subunits that are part of 70S ribosomes or polysomes). Required for efficient processing of 16S rRNA. May interact with the 5'-terminal helix region of 16S rRNA. In Variovorax paradoxus (strain S110), this protein is Ribosome-binding factor A.